We begin with the raw amino-acid sequence, 249 residues long: Flavodoxin/ferredoxin--NADP reductase (249 aa).

An FAD-binding FR-type domain is found at 2–102 (NTWITAKIIK…KKSYGFFTLN (101 aa)). FAD-binding positions include 51-54 (RAYS), Tyr67, 75-77 (QLT), and Thr117. NADP(+) contacts are provided by residues 144–145 (VR), 174–175 (SR), Arg185, and 215–217 (NPD). 248-249 (YW) serves as a coordination point for FAD.

It belongs to the ferredoxin--NADP reductase type 1 family. FAD is required as a cofactor.

The protein resides in the cytoplasm. It catalyses the reaction 2 reduced [2Fe-2S]-[ferredoxin] + NADP(+) + H(+) = 2 oxidized [2Fe-2S]-[ferredoxin] + NADPH. It carries out the reaction reduced [flavodoxin] + NADP(+) = oxidized [flavodoxin] + NADPH + 2 H(+). Transports electrons between flavodoxin or ferredoxin and NADPH. The polypeptide is Flavodoxin/ferredoxin--NADP reductase (fpr) (Buchnera aphidicola subsp. Baizongia pistaciae (strain Bp)).